Here is a 395-residue protein sequence, read N- to C-terminus: Chorismate synthase (395 aa).

Position 48 (R48) interacts with NADP(+). 125 to 127 (RSS) serves as a coordination point for FMN. Residues 264–292 (RNEDWTFDDGESFDHVESEEGDPVPVGND) form a disordered region. Residues G298, 313-317 (HAPTS), and R340 contribute to the FMN site. Residues 373–395 (PDRVDGNPGQYDTDYHPSSPDND) are disordered.

This sequence belongs to the chorismate synthase family. The cofactor is FMNH2.

It carries out the reaction 5-O-(1-carboxyvinyl)-3-phosphoshikimate = chorismate + phosphate. It functions in the pathway metabolic intermediate biosynthesis; chorismate biosynthesis; chorismate from D-erythrose 4-phosphate and phosphoenolpyruvate: step 7/7. Catalyzes the anti-1,4-elimination of the C-3 phosphate and the C-6 proR hydrogen from 5-enolpyruvylshikimate-3-phosphate (EPSP) to yield chorismate, which is the branch point compound that serves as the starting substrate for the three terminal pathways of aromatic amino acid biosynthesis. This reaction introduces a second double bond into the aromatic ring system. This Halorubrum lacusprofundi (strain ATCC 49239 / DSM 5036 / JCM 8891 / ACAM 34) protein is Chorismate synthase.